A 141-amino-acid chain; its full sequence is Globin, extracellular monomeric (141 aa).

The Globin domain occupies 1 to 141 (ECDALQRFKV…LGVITGAIHD (141 aa)). Cysteines 2 and 131 form a disulfide. His-94 is a heme b binding site.

It belongs to the globin family. As to quaternary structure, the giant hemoglobins of worms are formed of a monomeric subunit and a disulfide-bonded trimer. This subunit is monomeric.

It is found in the secreted. This is Globin, extracellular monomeric from Tubifex tubifex (Sludge worm).